Reading from the N-terminus, the 228-residue chain is ATP-dependent dethiobiotin synthetase BioD (228 aa).

Asp-13–Phe-18 lines the ATP pocket. Mg(2+) is bound at residue Thr-17. Lys-38 is an active-site residue. Ser-42 provides a ligand contact to substrate. ATP is bound by residues Asp-55, Glu-116–Gly-119, Asn-179–Lys-180, and Pro-208–Ile-210. Asp-55 and Glu-116 together coordinate Mg(2+).

Belongs to the dethiobiotin synthetase family. Homodimer. Mg(2+) is required as a cofactor.

The protein localises to the cytoplasm. The enzyme catalyses (7R,8S)-7,8-diammoniononanoate + CO2 + ATP = (4R,5S)-dethiobiotin + ADP + phosphate + 3 H(+). It participates in cofactor biosynthesis; biotin biosynthesis; biotin from 7,8-diaminononanoate: step 1/2. Its function is as follows. Catalyzes a mechanistically unusual reaction, the ATP-dependent insertion of CO2 between the N7 and N8 nitrogen atoms of 7,8-diaminopelargonic acid (DAPA, also called 7,8-diammoniononanoate) to form a ureido ring. In Clostridium perfringens (strain ATCC 13124 / DSM 756 / JCM 1290 / NCIMB 6125 / NCTC 8237 / Type A), this protein is ATP-dependent dethiobiotin synthetase BioD.